Consider the following 332-residue polypeptide: Melanocortin receptor 4 (332 aa).

At 1-43 the chain is on the extracellular side; that stretch reads MNSTLQHGMHTSLHFWNRSTYGQHSNATESLGKGYPDGGCYEQ. N-linked (GlcNAc...) asparagine glycans are attached at residues N2, N17, and N26. 2 disulfides stabilise this stretch: C40–C279 and C271–C277. The helical transmembrane segment at 44 to 69 threads the bilayer; the sequence is LFVSPEVFVTLGVISLLENILVIVAI. The Cytoplasmic segment spans residues 70–81; sequence AKNKNLHSPMYF. Residues 82–106 traverse the membrane as a helical segment; sequence FICSLAVADMLVSVSNGSETIVITL. Ca(2+)-binding residues include E100, D122, and D126. Residues 107 to 123 are Extracellular-facing; that stretch reads LNSTDTDAQSFTVNIDN. The chain crosses the membrane as a helical span at residues 124–145; the sequence is VIDSVICSSLLASICSLLSIAV. Over 146–165 the chain is Cytoplasmic; sequence DRYFTIFYALQYHNIMTVRR. The chain crosses the membrane as a helical span at residues 166–186; the sequence is VGIIISCIWAACTVSGILFII. The Extracellular portion of the chain corresponds to 187–191; sequence YSDST. The helical transmembrane segment at 192–215 threads the bilayer; it reads AVIICLITMFFTMLALMASLYVHM. The Cytoplasmic portion of the chain corresponds to 216-248; sequence FLMARLHIKRIAVLPGTGTIRQGANMKGAITLT. Residues 249–271 form a helical membrane-spanning segment; sequence ILIGVFVVCWAPFFLHLIFYISC. At 272 to 280 the chain is on the extracellular side; that stretch reads PQNPYCVCF. A helical membrane pass occupies residues 281–304; it reads MSHFNLYLILIMCNSIIDPLIYAL. Residues 305–332 are Cytoplasmic-facing; the sequence is RSQELRKTFKEIICCYPLGGLCDLSSRY. The S-palmitoyl cysteine moiety is linked to residue C318.

The protein belongs to the G-protein coupled receptor 1 family. Homodimer; disulfide-linked, also forms higher order oligomers. Interacts with GNAS. Interacts with ATRNL1. Interacts with MGRN1; this interaction competes with GNAS-binding and thus inhibits agonist-induced cAMP production. Interacts with MRAP and MRAP2; these associated factors increase ligand-sensitivity and generation of cAMP.

It is found in the cell membrane. Functionally, hormone receptor that acts as a key component of the leptin-melanocortin pathway at the intersection of homeostatic maintenance of energetic state. Plays a role in regulating food intake: activation by a stimulating hormone such as anorexigenic alpha-melanocyte stimulating hormone (alpha-MSH) inhibits appetite, whereas binding to a natural antagonist like Agouti-related protein/AGRP promotes appetite. G-protein-coupled receptor that activates conventional Galphas signaling leading to induction of anorexogenic signaling in the hypothalamus to result in negative energy balance. Regulates the firing activity of neurons from the hypothalamus by alpha-MSH and AGRP independently of Galphas signaling by ligand-induced coupling of closure of inwardly rectifying potassium channel KCNJ13. In intestinal epithelial cells, plays a role in the inhibition of hepatic glucose production via nesfatin-1/NUCB2 leading to increased cyclic adenosine monophosphate (cAMP) levels and glucagon-like peptide 1 (GLP-1) secretion in the intestinal epithelium. This Vulpes vulpes (Red fox) protein is Melanocortin receptor 4 (MC4R).